The primary structure comprises 624 residues: DNA-directed RNA polymerase subunit gamma (624 aa).

Positions 70, 72, 85, and 88 each coordinate Zn(2+). Mg(2+) contacts are provided by D466, D468, and D470.

The protein belongs to the RNA polymerase beta' chain family. RpoC1 subfamily. In terms of assembly, in cyanobacteria the RNAP catalytic core is composed of 2 alpha, 1 beta, 1 beta', 1 gamma and 1 omega subunit. When a sigma factor is associated with the core the holoenzyme is formed, which can initiate transcription. It depends on Mg(2+) as a cofactor. The cofactor is Zn(2+).

The enzyme catalyses RNA(n) + a ribonucleoside 5'-triphosphate = RNA(n+1) + diphosphate. Functionally, DNA-dependent RNA polymerase catalyzes the transcription of DNA into RNA using the four ribonucleoside triphosphates as substrates. The protein is DNA-directed RNA polymerase subunit gamma of Synechococcus elongatus (strain ATCC 33912 / PCC 7942 / FACHB-805) (Anacystis nidulans R2).